The following is an 852-amino-acid chain: Disks large homolog 2 (852 aa).

S-palmitoyl cysteine attachment occurs at residues Cys-5 and Cys-7. Residue Ser-28 is modified to Phosphoserine. The residue at position 58 (Tyr-58) is a Phosphotyrosine. At Ser-65 the chain carries Phosphoserine. PDZ domains are found at residues 98–185 (EITL…RRRR) and 193–280 (EIKL…GKPT). A phosphoserine mark is found at Ser-307, Ser-328, Ser-360, Ser-365, Ser-406, and Ser-414. In terms of domain architecture, PDZ 3 spans 421–502 (KVVLHKGSTG…TVTIIAQYQP (82 aa)). Tyr-505 carries the post-translational modification Phosphotyrosine. 3 positions are modified to phosphoserine: Ser-528, Ser-530, and Ser-553. One can recognise an SH3 domain in the interval 536 to 606 (KRSLYVRAMF…PSKRRVERKE (71 aa)). The Guanylate kinase-like domain occupies 662–837 (TRPVIILGPM…IYNQCKLVIE (176 aa)). A phosphotyrosine mark is found at Tyr-732 and Tyr-737.

As to quaternary structure, interacts with NOS1/nNOS through second PDZ domain. Interacts with KCNJ2/Kir2.1 (via C-terminus) through one of its PDZ domains. Interacts with KCNJ4. Interacts with FRMPD4 (via C-terminus). Interacts through its PDZ domains with NETO1. Interacts with LRFN1, LRFN2 and LRFN4. Interacts with FASLG. Interacts with KCNJ4. Interacts with ADAM22. Interacts with DGKI (via PDZ-binding motif). In terms of processing, palmitoylation of isoform 1 and isoform 2 is not required for targeting to postsynaptic density. As to expression, brain. Highest levels of isoform 1 in cortex, olfactory bulb, thalamus, hypothalamus, striatum and hippocampus. Highest level of isoform 2 in olfactory bulb. Reduced levels in cortex and hippocampus. Highest level of isoform 4 in spinal cord. Low levels of isoform 4, isoform 6, and isoform 7 in superior cervical ganglion.

The protein resides in the cell membrane. The protein localises to the postsynaptic density. It localises to the synapse. It is found in the membrane. Its subcellular location is the cell projection. The protein resides in the axon. The protein localises to the perikaryon. In terms of biological role, required for perception of chronic pain through NMDA receptor signaling. Regulates surface expression of NMDA receptors in dorsal horn neurons of the spinal cord. Interacts with the cytoplasmic tail of NMDA receptor subunits as well as inward rectifying potassium channels. Involved in regulation of synaptic stability at cholinergic synapses. Part of the postsynaptic protein scaffold of excitatory synapses. In Mus musculus (Mouse), this protein is Disks large homolog 2 (Dlg2).